Here is a 666-residue protein sequence, read N- to C-terminus: L-aspartate N-monooxygenase (nitrosuccinate-forming) (666 aa).

The tract at residues 645-666 (LPAYEDPGVRCPSDDRLTEVTA) is disordered. Over residues 656 to 666 (PSDDRLTEVTA) the composition is skewed to basic and acidic residues.

The protein belongs to the nitrosuccinic acid synthase family. The cofactor is FAD.

It catalyses the reaction L-aspartate + 3 NADPH + 3 O2 + 2 H(+) = 2-nitrobutanedioate + 3 NADP(+) + 4 H2O. It functions in the pathway antibiotic biosynthesis. Functionally, part of a gene cluster involved in the biosynthesis of cremeomycin, a light-sensitive o-diazoquinone with antibacterial and antiproliferative effects. Catalyzes the iterative oxidation of L-aspartic acid to nitrosuccinic acid (2-nitrobutanedioate) via N-hydroxyaspartic acid and nitrososuccinic acid. The protein is L-aspartate N-monooxygenase (nitrosuccinate-forming) of Streptomyces cremeus.